The chain runs to 736 residues: Na(+)/H(+) antiporter NhaA (736 aa).

Positions 1–387 (MNHSPQSARP…ICGYLLLRAA (387 aa)) are na(+)/H(+) antiporter NhaA. Helical transmembrane passes span 23–43 (AGGI…NSPF), 58–78 (LSLA…LVGL), 96–116 (MLPG…FAVL), 126–146 (GWAV…SLLG), 155–175 (VFLA…IAIF), 178–198 (AEIS…LFVM), 201–221 (MGVV…FFVF), 224–244 (GVHA…KPAP), 265–285 (VAFI…FKGL), 298–318 (ILLG…WLAI), 334–354 (LYGV…IGLL), and 367–387 (IGVL…LRAA). The peptidase S49 stretch occupies residues 388–736 (RPDQSAANPL…EKAIWARYGL (349 aa)).

In the N-terminal section; belongs to the NhaA Na(+)/H(+) (TC 2.A.33) antiporter family. This sequence in the C-terminal section; belongs to the peptidase S49 family.

It is found in the cell inner membrane. It carries out the reaction Na(+)(in) + 2 H(+)(out) = Na(+)(out) + 2 H(+)(in). In terms of biological role, na(+)/H(+) antiporter that extrudes sodium in exchange for external protons. This chain is Na(+)/H(+) antiporter NhaA, found in Brucella abortus (strain 2308).